A 256-amino-acid chain; its full sequence is MADPQIITIPCLQDNYAFLLHDPSTGATACIDVPDAAPIQAALGAQGWTLTDILLTHHHWDHIDGVPALVEATGAKVWGAAADAHRLPPLDHALAEGDTIRIGALEGDVMDVSGHTVGHVAFHFPAATAVFTADSLMALGCGRLFEGTPAQMHGSLEKLKMLPPGTLVCSGHEYTASNARFALTIEPDNPDLIFRVERITAARAAGQPTVPSTLAEELATNPFLRADAPTVAAPLDMEGADPVDVFTRIRAQKDSF.

Zn(2+)-binding residues include histidine 57, histidine 59, aspartate 61, histidine 62, histidine 115, aspartate 134, and histidine 172.

Belongs to the metallo-beta-lactamase superfamily. Glyoxalase II family. In terms of assembly, monomer. Zn(2+) is required as a cofactor.

The catalysed reaction is an S-(2-hydroxyacyl)glutathione + H2O = a 2-hydroxy carboxylate + glutathione + H(+). It participates in secondary metabolite metabolism; methylglyoxal degradation; (R)-lactate from methylglyoxal: step 2/2. Its function is as follows. Thiolesterase that catalyzes the hydrolysis of S-D-lactoyl-glutathione to form glutathione and D-lactic acid. This is Hydroxyacylglutathione hydrolase from Jannaschia sp. (strain CCS1).